A 395-amino-acid polypeptide reads, in one-letter code: Succinyl-diaminopimelate desuccinylase 2 (395 aa).

Residue His-79 coordinates Zn(2+). Asp-81 is a catalytic residue. Asp-112 contacts Zn(2+). Catalysis depends on Glu-145, which acts as the Proton acceptor. Zn(2+) is bound by residues Glu-146, Glu-174, and His-363.

It belongs to the peptidase M20A family. DapE subfamily. As to quaternary structure, homodimer. Zn(2+) serves as cofactor. It depends on Co(2+) as a cofactor.

The catalysed reaction is N-succinyl-(2S,6S)-2,6-diaminopimelate + H2O = (2S,6S)-2,6-diaminopimelate + succinate. The protein operates within amino-acid biosynthesis; L-lysine biosynthesis via DAP pathway; LL-2,6-diaminopimelate from (S)-tetrahydrodipicolinate (succinylase route): step 3/3. In terms of biological role, catalyzes the hydrolysis of N-succinyl-L,L-diaminopimelic acid (SDAP), forming succinate and LL-2,6-diaminopimelate (DAP), an intermediate involved in the bacterial biosynthesis of lysine and meso-diaminopimelic acid, an essential component of bacterial cell walls. This chain is Succinyl-diaminopimelate desuccinylase 2, found in Ruegeria sp. (strain TM1040) (Silicibacter sp.).